Consider the following 500-residue polypeptide: Probable cytosol aminopeptidase (500 aa).

Mn(2+) contacts are provided by K262 and D267. Residue K274 is part of the active site. Mn(2+)-binding residues include D285, D344, and E346. R348 is a catalytic residue.

This sequence belongs to the peptidase M17 family. Requires Mn(2+) as cofactor.

The protein localises to the cytoplasm. It carries out the reaction Release of an N-terminal amino acid, Xaa-|-Yaa-, in which Xaa is preferably Leu, but may be other amino acids including Pro although not Arg or Lys, and Yaa may be Pro. Amino acid amides and methyl esters are also readily hydrolyzed, but rates on arylamides are exceedingly low.. The enzyme catalyses Release of an N-terminal amino acid, preferentially leucine, but not glutamic or aspartic acids.. Functionally, presumably involved in the processing and regular turnover of intracellular proteins. Catalyzes the removal of unsubstituted N-terminal amino acids from various peptides. This is Probable cytosol aminopeptidase from Ehrlichia ruminantium (strain Gardel).